The sequence spans 64 residues: MQKDSEKVTYMFSNLIGFLETAIIEGTASQEENTLYEDYKLFGTIDKKSYTYKNLVHKYLKSDY.

The chain is SPbeta prophage-derived uncharacterized protein YonP (yonP) from Bacillus subtilis (strain 168).